We begin with the raw amino-acid sequence, 181 residues long: MSADENNLIWIDLEMTGLDPERDRIIEIATLVTDANLNILAEGPTIAVHQSDAQLALMDDWNVRTHTGSGLVERVKASTQGDREAELATIEFLKQWIPAGKSPICGNSIGQDRRFLFKYMPELEAYFHYRYLDVSTLKELARRWKPEILDGFKKQGTHQAMDDIRESVAELAFYRENFIKL.

In terms of domain architecture, Exonuclease spans 8–171; the sequence is LIWIDLEMTG…DDIRESVAEL (164 aa). Tyr-129 is a catalytic residue.

Belongs to the oligoribonuclease family.

Its subcellular location is the cytoplasm. 3'-to-5' exoribonuclease specific for small oligoribonucleotides. This Enterobacter sp. (strain 638) protein is Oligoribonuclease.